The following is a 709-amino-acid chain: ATP-binding cassette sub-family F member 3 (709 aa).

The residue at position 2 (Ala-2) is an N-acetylalanine. The residue at position 83 (Ser-83) is a Phosphoserine. The segment covering 129–143 (RLKAKQEKRSEKETL) has biased composition (basic and acidic residues). Residues 129-171 (RLKAKQEKRSEKETLKTSNPLVLEEASASQAGSRKESRLESSG) are disordered. Residues Ser-155, Ser-157, and Ser-161 each carry the phosphoserine modification. The span at 161-171 (SRKESRLESSG) shows a compositional bias: basic and acidic residues. ABC transporter domains lie at 178 to 424 (VRIE…LNQQ) and 492 to 707 (LQLD…RREG). Residue 210–217 (GRNGLGKT) coordinates ATP. Ser-283 is subject to Phosphoserine. An ATP-binding site is contributed by 525 to 532 (GENGAGKS).

The protein belongs to the ABC transporter superfamily. ABCF family. EF3 subfamily.

In terms of biological role, displays an antiviral effect against flaviviruses such as west Nile virus (WNV) in the presence of OAS1B. The protein is ATP-binding cassette sub-family F member 3 (Abcf3) of Mus musculus (Mouse).